Consider the following 81-residue polypeptide: Photosystem I iron-sulfur center (81 aa).

4Fe-4S ferredoxin-type domains follow at residues 1–31 (MSHK…MVPW) and 39–68 (IASS…IRVY). [4Fe-4S] cluster is bound by residues Cys11, Cys14, Cys17, Cys21, Cys48, Cys51, Cys54, and Cys58.

The cyanobacterial PSI reaction center is composed of one copy each of PsaA,B,C,D,E,F,I,J,K,L,M and X, and forms trimeric complexes. [4Fe-4S] cluster is required as a cofactor.

It is found in the cellular thylakoid membrane. The catalysed reaction is reduced [plastocyanin] + hnu + oxidized [2Fe-2S]-[ferredoxin] = oxidized [plastocyanin] + reduced [2Fe-2S]-[ferredoxin]. Apoprotein for the two 4Fe-4S centers FA and FB of photosystem I (PSI); essential for photochemical activity. FB is the terminal electron acceptor of PSI, donating electrons to ferredoxin. The C-terminus interacts with PsaA/B/D and helps assemble the protein into the PSI complex. Required for binding of PsaD and PsaE to PSI. PSI is a plastocyanin/cytochrome c6-ferredoxin oxidoreductase, converting photonic excitation into a charge separation, which transfers an electron from the donor P700 chlorophyll pair to the spectroscopically characterized acceptors A0, A1, FX, FA and FB in turn. This Crocosphaera subtropica (strain ATCC 51142 / BH68) (Cyanothece sp. (strain ATCC 51142)) protein is Photosystem I iron-sulfur center.